Reading from the N-terminus, the 47-residue chain is PhoP/PhoQ regulator MgrB (47 aa).

A helical membrane pass occupies residues 6–26 (WVVLGIVVVVCLLLWAQVFNI).

Belongs to the MgrB family. As to quaternary structure, may form homooligomers. Probably interacts with the periplasmic domain of PhoQ.

Its subcellular location is the cell inner membrane. Its function is as follows. PhoP-regulated transcription is redox-sensitive, being activated when the periplasm becomes more reducing. MgrB acts between DsbA/DsbB and PhoP/PhoQ in this pathway. Represses PhoP/PhoQ signaling, possibly by binding to the periplasmic domain of PhoQ, altering its activity and that of downstream effector PhoP. This chain is PhoP/PhoQ regulator MgrB, found in Salmonella gallinarum (strain 287/91 / NCTC 13346).